We begin with the raw amino-acid sequence, 305 residues long: MDYSVNKMQLPSPAKLNLFLHITGRREDGYHELQTLFQFIDLCDTLDFSLTRNNQITISPIIEQLPTEDNLIYKAAKLLTPFKKDSTFGIDIILTKQLPMGGGIGGGSSNAATALLALNVLWGCQLSLEKLAELGVQLGADIPVFVMGFAAFAEGVGEKLQKVELDTPYFLLIKPNCHVSTGQIFTDKYLTRDTPPIRISHALKLGGHNDCLDVVKKHNPEVNEAYLWLKNYGDAKLTGTGACLFLAFDNLRDAERVRSSTPTKWQSWVCRGCNTSPTHAALNQWIEQNRGVPHIKHHLSQSFLG.

Lys15 is an active-site residue. 99–109 (PMGGGIGGGSS) lines the ATP pocket. Asp141 is an active-site residue.

Belongs to the GHMP kinase family. IspE subfamily.

The catalysed reaction is 4-CDP-2-C-methyl-D-erythritol + ATP = 4-CDP-2-C-methyl-D-erythritol 2-phosphate + ADP + H(+). It participates in isoprenoid biosynthesis; isopentenyl diphosphate biosynthesis via DXP pathway; isopentenyl diphosphate from 1-deoxy-D-xylulose 5-phosphate: step 3/6. In terms of biological role, catalyzes the phosphorylation of the position 2 hydroxy group of 4-diphosphocytidyl-2C-methyl-D-erythritol. The protein is 4-diphosphocytidyl-2-C-methyl-D-erythritol kinase of Marinomonas sp. (strain MWYL1).